Reading from the N-terminus, the 255-residue chain is Type III pantothenate kinase (255 aa).

6-13 serves as a coordination point for ATP; it reads DVGNTNIV. Substrate-binding positions include tyrosine 100 and 107–110; that span reads GADR. The active-site Proton acceptor is the aspartate 109. Aspartate 129 lines the K(+) pocket. Threonine 132 provides a ligand contact to ATP. Substrate is bound at residue threonine 184.

The protein belongs to the type III pantothenate kinase family. Homodimer. NH4(+) serves as cofactor. The cofactor is K(+).

The protein localises to the cytoplasm. The enzyme catalyses (R)-pantothenate + ATP = (R)-4'-phosphopantothenate + ADP + H(+). The protein operates within cofactor biosynthesis; coenzyme A biosynthesis; CoA from (R)-pantothenate: step 1/5. Functionally, catalyzes the phosphorylation of pantothenate (Pan), the first step in CoA biosynthesis. The protein is Type III pantothenate kinase of Geobacter sulfurreducens (strain ATCC 51573 / DSM 12127 / PCA).